The sequence spans 525 residues: GMP synthase [glutamine-hydrolyzing] (525 aa).

The 198-residue stretch at 3–200 (KILILDFGSQ…VLHVAGCKPS (198 aa)) folds into the Glutamine amidotransferase type-1 domain. Cys79 serves as the catalytic Nucleophile. Residues His174 and Glu176 contribute to the active site. The 193-residue stretch at 201–393 (WTMPNYIDEA…LGLPHDMVYR (193 aa)) folds into the GMPS ATP-PPase domain. 228 to 234 (SGGVDSS) contributes to the ATP binding site.

As to quaternary structure, homodimer.

The catalysed reaction is XMP + L-glutamine + ATP + H2O = GMP + L-glutamate + AMP + diphosphate + 2 H(+). It participates in purine metabolism; GMP biosynthesis; GMP from XMP (L-Gln route): step 1/1. Functionally, catalyzes the synthesis of GMP from XMP. This Chromobacterium violaceum (strain ATCC 12472 / DSM 30191 / JCM 1249 / CCUG 213 / NBRC 12614 / NCIMB 9131 / NCTC 9757 / MK) protein is GMP synthase [glutamine-hydrolyzing].